Consider the following 347-residue polypeptide: NADH-quinone oxidoreductase subunit H (347 aa).

The next 8 helical transmembrane spans lie at 25–45, 95–115, 128–148, 168–188, 200–220, 251–271, 284–304, and 324–344; these read ILFM…VAAM, FMFT…FAII, IGIL…LFGG, ISYE…TGSF, GWYI…GVAV, FFIG…CLFF, FIPP…MFIL, and VCLP…LIFS.

This sequence belongs to the complex I subunit 1 family. NDH-1 is composed of 14 different subunits. Subunits NuoA, H, J, K, L, M, N constitute the membrane sector of the complex.

Its subcellular location is the cell inner membrane. The enzyme catalyses a quinone + NADH + 5 H(+)(in) = a quinol + NAD(+) + 4 H(+)(out). NDH-1 shuttles electrons from NADH, via FMN and iron-sulfur (Fe-S) centers, to quinones in the respiratory chain. The immediate electron acceptor for the enzyme in this species is believed to be ubiquinone. Couples the redox reaction to proton translocation (for every two electrons transferred, four hydrogen ions are translocated across the cytoplasmic membrane), and thus conserves the redox energy in a proton gradient. This subunit may bind ubiquinone. The protein is NADH-quinone oxidoreductase subunit H of Psychrobacter arcticus (strain DSM 17307 / VKM B-2377 / 273-4).